Here is a 218-residue protein sequence, read N- to C-terminus: Small ribosomal subunit protein uS3c (218 aa).

In terms of domain architecture, KH type-2 spans 39–120; that stretch reads IRNFMNKELL…IITCKVVGVT (82 aa).

Belongs to the universal ribosomal protein uS3 family. Part of the 30S ribosomal subunit.

The protein resides in the plastid. It is found in the chloroplast. This is Small ribosomal subunit protein uS3c (rps3) from Euglena gracilis.